We begin with the raw amino-acid sequence, 104 residues long: ATP-dependent Clp protease adapter protein ClpS (104 aa).

This sequence belongs to the ClpS family. As to quaternary structure, binds to the N-terminal domain of the chaperone ClpA.

Functionally, involved in the modulation of the specificity of the ClpAP-mediated ATP-dependent protein degradation. The polypeptide is ATP-dependent Clp protease adapter protein ClpS (Paraburkholderia phymatum (strain DSM 17167 / CIP 108236 / LMG 21445 / STM815) (Burkholderia phymatum)).